The chain runs to 307 residues: Olfactory receptor 5AC1 (307 aa).

Residues 1 to 28 (MAEENKILVTHFVLTGLTDHPGLQAPLF) lie on the Extracellular side of the membrane. Residues 29-49 (LVFLVIYLITLVGNLGLMALI) traverse the membrane as a helical segment. Residues 50–56 (WKDPHLH) lie on the Cytoplasmic side of the membrane. Residues 57 to 77 (TPIYLFLGSLAFADACTSSSV) form a helical membrane-spanning segment. At 78-99 (TSKMLINFLSKNHMLSMAKCAT) the chain is on the extracellular side. A disulfide bridge connects residues Cys97 and Cys179. Residues 100-120 (QFYFFGSNATTECFLLVVMAY) form a helical membrane-spanning segment. Residues 121 to 143 (DRYVAICNPLLYPVVMSNSLCTQ) lie on the Cytoplasmic side of the membrane. The helical transmembrane segment at 144 to 164 (FIGISYFIGFLHSAIHVGLLF) threads the bilayer. The Extracellular portion of the chain corresponds to 165 to 195 (RLTFCRSNIIHYFYCEILQLFKISCTNPTVN). The helical transmembrane segment at 196-216 (ILLIFIFSAFIQVFTFMTLIV) threads the bilayer. At 217 to 239 (SYSYILSAILKKKSEKGRSKAFS) the chain is on the cytoplasmic side. The helical transmembrane segment at 240-260 (TCSAHLLSVSLFYGTLFFMYV) threads the bilayer. The Extracellular segment spans residues 261–271 (SSRSGSAADQA). Residues 272-292 (KMYSLFYTIIIPLLNPFIYSL) form a helical membrane-spanning segment. The Cytoplasmic segment spans residues 293–307 (RNKEVIDALRRIMKK).

Belongs to the G-protein coupled receptor 1 family.

Its subcellular location is the cell membrane. Its function is as follows. Odorant receptor. The sequence is that of Olfactory receptor 5AC1 (OR5AC1) from Homo sapiens (Human).